The following is a 590-amino-acid chain: MNMTDCSVGSNPLAQLNKHAQGQGSSLSNTHVRHSGGVSGSNVFRSGQNVVSEDGRQQLNSFMSQPMRLGEDKMHPATPMGSSMGNAIGGSMMQVDDSSMRSAGDSQWTREFRQNTAGKTNMAQEMGSSGAAMANSNAWKFRYSPMTNVNNTAPLRPFNNIIRQKERANGLETGDIAWNDKFDELEKEVSDKLNFKDGETVEKMDTGAEMQQDNLETGDSTDYQKEFQEVWDSIQQDTEEMLSYKDDYEDMLNDTDFERSFLGKRAVESLEYKFENPSENQYMNNPNAYQIGCILMENGAKLSEAALAFEAAIKQDPKHVDAWLKLGIVQIQNEKELNGMSALETCLKLDPNNLEAMKNLAISYINEGYDMSAYNMLNRWADTKYPGFYNSAELEGKRDEHENIHSKMTRRFLSLVNRINSVDPDIQLCLGLLFYANDEFDRTIDCFQAALKVNPNDELMWNRLGASLANSNRSEEAIQAYHRALQLKPSFVRARYNLAVSSMNIGCYKEAAEHLLTALSMHDVEGEFEVQSTRSNSISSADKYSFSGFKPTDNLLETLKRVFISMGRDDLLDRVRPGMDLSQFRNEFTF.

Cysteine 6 participates in a covalent cross-link: Glycyl cysteine thioester (Cys-Gly) (interchain with G-Cter in ubiquitin). Residues 7-29 (SVGSNPLAQLNKHAQGQGSSLSN) form an amphipathic helix 1 (AH1) region. Residue lysine 18 forms a Glycyl lysine isopeptide (Lys-Gly) (interchain with G-Cter in ubiquitin) linkage. The segment covering 18 to 30 (KHAQGQGSSLSNT) has biased composition (polar residues). Residues 18-45 (KHAQGQGSSLSNTHVRHSGGVSGSNVFR) are disordered. Residues 56-74 (RQQLNSFMSQPMRLGEDKM) are amphipathic helix 2 (AH2). Short sequence motifs (wxxxF/Y motif) lie at residues 108 to 112 (WTREF), 139 to 143 (WKFRY), and 178 to 182 (WNDKF). An amphipathic helix 4 (AH4) region spans residues 227 to 243 (FQEVWDSIQQDTEEMLS). TPR repeat units lie at residues 285–319 (NPNA…DPKH), 320–353 (VDAW…DPNN), 424–457 (PDIQ…NPND), 459–491 (LMWN…KPSF), and 493–525 (RARY…HDVE).

This sequence belongs to the peroxisomal targeting signal receptor family. As to quaternary structure, interacts (via WxxxF/Y and LVxEF motifs) with PEX14; promoting translocation through the PEX13-PEX14 docking complex. Monoubiquitinated at Cys-6 by PEX2 during PEX5 passage through the retrotranslocation channel: monoubiquitination acts as a signal for PEX5 extraction and is required for proper export from peroxisomes and recycling. When PEX5 recycling is compromised, polyubiquitinated at Lys-18 by PEX10 during its passage through the retrotranslocation channel, leading to its degradation.

The protein localises to the cytoplasm. The protein resides in the cytosol. It is found in the peroxisome matrix. In terms of biological role, receptor that mediates peroxisomal import of proteins containing a C-terminal PTS1-type tripeptide peroxisomal targeting signal (SKL-type). Binds to cargo proteins containing a PTS1 peroxisomal targeting signal in the cytosol, and translocates them into the peroxisome matrix by passing through the PEX13-PEX14 docking complex along with cargo proteins. PEX5 receptor is then retrotranslocated into the cytosol, leading to release of bound cargo in the peroxisome matrix, and reset for a subsequent peroxisome import cycle. The polypeptide is Peroxisomal targeting signal receptor (PEX5) (Candida glabrata (strain ATCC 2001 / BCRC 20586 / JCM 3761 / NBRC 0622 / NRRL Y-65 / CBS 138) (Yeast)).